A 698-amino-acid polypeptide reads, in one-letter code: Ubiquitin-like modifier-activating enzyme ATG7 (698 aa).

An FAP motif motif is present at residues 11 to 13; it reads FAP. Lysine 41 participates in a covalent cross-link: Glycyl lysine isopeptide (Lys-Gly) (interchain with G-Cter in ubiquitin). Cysteine 567 (glycyl thioester intermediate) is an active-site residue. Serine 693 is subject to Phosphoserine.

The protein belongs to the ATG7 family. As to quaternary structure, homodimer. Interacts with ATG3; this interaction is essential for the transfer of ATG8-like proteins's thioester from ATG7 to ATG3 and plays a role in the conjugation of ATG12 to ATG5. Interacts with ATG12. Interacts with ATG10. Forms intermediate conjugates with GABARAPL1. Forms intermediate conjugates with ATG8-like proteins such as GABARAP, GABARAPL2 or MAP1LC3A. Interacts with EP300 acetyltransferase. Interacts with FOXO1. Acetylated by EP300. In terms of processing, polyubiquitinated on Lys-41 via 'Lys-63'-linked ubiquitin by TRIM32; this modification positiely regulates ATG8 and ATG12 activating enzyme activity leading to initiation of autophagy under metabolic stress. As to expression, widely expressed, especially in kidney, liver, lymph nodes and bone marrow.

It localises to the cytoplasm. It is found in the preautophagosomal structure. In terms of biological role, E1-like activating enzyme involved in the 2 ubiquitin-like systems required for cytoplasm to vacuole transport (Cvt) and autophagy. Activates ATG12 for its conjugation with ATG5 as well as the ATG8 family proteins for their conjugation with phosphatidylethanolamine. Both systems are needed for the ATG8 association to Cvt vesicles and autophagosomes membranes. Facilitates LC3-I lipidation with phosphatidylethanolamine to form LC3-II which is found on autophagosomal membranes. Required for autophagic death induced by caspase-8 inhibition. Required for mitophagy which contributes to regulate mitochondrial quantity and quality by eliminating the mitochondria to a basal level to fulfill cellular energy requirements and preventing excess ROS production. Modulates p53/TP53 activity to regulate cell cycle and survival during metabolic stress. Also plays a key role in the maintenance of axonal homeostasis, the prevention of axonal degeneration, the maintenance of hematopoietic stem cells, the formation of Paneth cell granules, as well as in adipose differentiation. Plays a role in regulating the liver clock and glucose metabolism by mediating the autophagic degradation of CRY1 (clock repressor) in a time-dependent manner. The chain is Ubiquitin-like modifier-activating enzyme ATG7 from Mus musculus (Mouse).